The following is a 49-amino-acid chain: uncharacterized protein (49 aa).

The chain crosses the membrane as a helical span at residues 8–28 (FFLFSSGVLQATTLLLVILIF).

Its subcellular location is the cell membrane. This is an uncharacterized protein from Bacillus subtilis (strain 168).